The following is a 317-amino-acid chain: L-lactate dehydrogenase (317 aa).

NAD(+) is bound by residues V17, D38, K43, Y68, and 82 to 83 (GV). Residue R91 coordinates substrate. Residues S104, 121–123 (VSN), and S146 each bind NAD(+). 123 to 126 (NPVD) provides a ligand contact to substrate. Position 151–154 (151–154 (DTSR)) interacts with substrate. Positions 156 and 171 each coordinate beta-D-fructose 1,6-bisphosphate. The active-site Proton acceptor is the H178. A Phosphotyrosine modification is found at Y224. T233 provides a ligand contact to substrate.

It belongs to the LDH/MDH superfamily. LDH family. Homotetramer.

The protein resides in the cytoplasm. The enzyme catalyses (S)-lactate + NAD(+) = pyruvate + NADH + H(+). It functions in the pathway fermentation; pyruvate fermentation to lactate; (S)-lactate from pyruvate: step 1/1. Allosterically activated by fructose 1,6-bisphosphate (FBP). Catalyzes the conversion of lactate to pyruvate. This is L-lactate dehydrogenase from Clostridium perfringens (strain ATCC 13124 / DSM 756 / JCM 1290 / NCIMB 6125 / NCTC 8237 / Type A).